The sequence spans 371 residues: Aspartate-semialdehyde dehydrogenase (371 aa).

Residues 9–12, 37–38, and Q73 contribute to the NADP(+) site; these read RGMV and TS. R102 serves as a coordination point for phosphate. C135 serves as the catalytic Acyl-thioester intermediate. Q162 serves as a coordination point for substrate. Residues 165–166 and P193 each bind NADP(+); that span reads SG. Residue E241 coordinates substrate. K244 is a binding site for phosphate. R268 provides a ligand contact to substrate. The Proton acceptor role is filled by H275. Residue Q351 participates in NADP(+) binding.

The protein belongs to the aspartate-semialdehyde dehydrogenase family. Homodimer.

The catalysed reaction is L-aspartate 4-semialdehyde + phosphate + NADP(+) = 4-phospho-L-aspartate + NADPH + H(+). Its pathway is amino-acid biosynthesis; L-lysine biosynthesis via DAP pathway; (S)-tetrahydrodipicolinate from L-aspartate: step 2/4. It functions in the pathway amino-acid biosynthesis; L-methionine biosynthesis via de novo pathway; L-homoserine from L-aspartate: step 2/3. The protein operates within amino-acid biosynthesis; L-threonine biosynthesis; L-threonine from L-aspartate: step 2/5. Catalyzes the NADPH-dependent formation of L-aspartate-semialdehyde (L-ASA) by the reductive dephosphorylation of L-aspartyl-4-phosphate. The polypeptide is Aspartate-semialdehyde dehydrogenase (Neisseria meningitidis serogroup B (strain ATCC BAA-335 / MC58)).